The chain runs to 1311 residues: AF4/FMR2 family member 2 (1311 aa).

3 disordered regions span residues 94–187 (LVGI…LTQD), 204–229 (PQIG…GEDA), and 377–417 (TAGH…TKSV). Residues 101 to 111 (SVPQNPNNKNE) are compositionally biased toward polar residues. The span at 155-164 (SKPEWSRDSH) shows a compositional bias: basic and acidic residues. Positions 165-187 (NPSTVLASQASGQPNKMQTLTQD) are enriched in polar residues. Polar residues-rich tracts occupy residues 377 to 396 (TAGH…SQHL) and 403 to 417 (QKWN…TKSV). At serine 430 the chain carries Phosphoserine. 4 disordered regions span residues 457-530 (KAKP…KWQL), 574-726 (TNAS…DQEE), 818-867 (SLHA…IPEK), and 881-943 (PPCI…DKNI). The segment covering 465–477 (VNPPLATPQPPPA) has biased composition (pro residues). The segment covering 478–491 (VQASGGSGSSSESE) has biased composition (low complexity). The residue at position 517 (threonine 517) is a Phosphothreonine. Residues 582–597 (EPKERPLLSLIREKAR) are compositionally biased toward basic and acidic residues. Polar residues predominate over residues 615–625 (STTSETVSQRT). Basic and acidic residues predominate over residues 655–668 (PKEKESVELHDPPR). Residues 669 to 679 (GRNKATAHKPA) show a composition bias toward basic residues. Residues 857–867 (PIEVAEKIPEK) are compositionally biased toward basic and acidic residues. Pro residues-rich tracts occupy residues 883 to 892 (CISPAPPHKP) and 913 to 922 (FPPPLSPLPE).

The protein belongs to the AF4 family. In terms of tissue distribution, brain (most abundant in hippocampus and amygdala), placenta and lung.

It localises to the nucleus speckle. Its function is as follows. RNA-binding protein. Might be involved in alternative splicing regulation through an interaction with G-quartet RNA structure. This chain is AF4/FMR2 family member 2, found in Homo sapiens (Human).